We begin with the raw amino-acid sequence, 85 residues long: Cytochrome c2 (85 aa).

Positions 12, 15, 16, and 61 each coordinate heme c.

The protein belongs to the cytochrome c family. Binds 1 heme c group covalently per subunit.

Cytochrome c2 is found mainly in purple, non-sulfur, photosynthetic bacteria where it functions as the electron donor to the oxidized bacteriochlorophyll in the photophosphorylation pathway. However, it may also have a role in the respiratory chain and is found in some non-photosynthetic bacteria. The protein is Cytochrome c2 of Rubrivivax gelatinosus (Rhodocyclus gelatinosus).